The sequence spans 225 residues: Membrane-spanning 4-domains subfamily A member 4D (225 aa).

Topologically, residues M1 to K42 are cytoplasmic. A helical membrane pass occupies residues V43–I63. Topologically, residues L64–S73 are extracellular. A helical membrane pass occupies residues V74 to I94. Residues A95 to T113 are Cytoplasmic-facing. The chain crosses the membrane as a helical span at residues I114–V134. Residues F135–D148 lie on the Extracellular side of the membrane. The chain crosses the membrane as a helical span at residues V149–G169. Over C170–V225 the chain is Cytoplasmic.

It belongs to the MS4A family. In terms of tissue distribution, expressed in thymus, spleen, peripheral lymph node, liver, kidney, heart, colon, lung, and testes.

It localises to the membrane. In terms of biological role, may be involved in signal transduction as a component of a multimeric receptor complex. This is Membrane-spanning 4-domains subfamily A member 4D (Ms4a4d) from Mus musculus (Mouse).